The following is a 215-amino-acid chain: Ribonuclease T (215 aa).

The 175-residue stretch at 20-194 (VVIDVETAGF…YDTERTAVLF (175 aa)) folds into the Exonuclease domain. Mg(2+)-binding residues include Asp23, Glu25, His181, and Asp186. Catalysis depends on His181, which acts as the Proton donor/acceptor.

The protein belongs to the RNase T family. In terms of assembly, homodimer. Mg(2+) is required as a cofactor.

In terms of biological role, trims short 3' overhangs of a variety of RNA species, leaving a one or two nucleotide 3' overhang. Responsible for the end-turnover of tRNA: specifically removes the terminal AMP residue from uncharged tRNA (tRNA-C-C-A). Also appears to be involved in tRNA biosynthesis. This chain is Ribonuclease T, found in Shigella dysenteriae serotype 1 (strain Sd197).